We begin with the raw amino-acid sequence, 133 residues long: Ribosome-binding factor A (133 aa).

It belongs to the RbfA family. Monomer. Binds 30S ribosomal subunits, but not 50S ribosomal subunits or 70S ribosomes.

The protein localises to the cytoplasm. Functionally, one of several proteins that assist in the late maturation steps of the functional core of the 30S ribosomal subunit. Associates with free 30S ribosomal subunits (but not with 30S subunits that are part of 70S ribosomes or polysomes). Required for efficient processing of 16S rRNA. May interact with the 5'-terminal helix region of 16S rRNA. This chain is Ribosome-binding factor A, found in Escherichia coli O127:H6 (strain E2348/69 / EPEC).